The following is a 321-amino-acid chain: Lipoyl synthase (321 aa).

Residues C68, C73, C79, C94, C98, C101, and S308 each coordinate [4Fe-4S] cluster. Positions 80 to 297 (FNHGTATFMI…KVLADELGFT (218 aa)) constitute a Radical SAM core domain.

This sequence belongs to the radical SAM superfamily. Lipoyl synthase family. [4Fe-4S] cluster is required as a cofactor.

Its subcellular location is the cytoplasm. It carries out the reaction [[Fe-S] cluster scaffold protein carrying a second [4Fe-4S](2+) cluster] + N(6)-octanoyl-L-lysyl-[protein] + 2 oxidized [2Fe-2S]-[ferredoxin] + 2 S-adenosyl-L-methionine + 4 H(+) = [[Fe-S] cluster scaffold protein] + N(6)-[(R)-dihydrolipoyl]-L-lysyl-[protein] + 4 Fe(3+) + 2 hydrogen sulfide + 2 5'-deoxyadenosine + 2 L-methionine + 2 reduced [2Fe-2S]-[ferredoxin]. Its pathway is protein modification; protein lipoylation via endogenous pathway; protein N(6)-(lipoyl)lysine from octanoyl-[acyl-carrier-protein]: step 2/2. In terms of biological role, catalyzes the radical-mediated insertion of two sulfur atoms into the C-6 and C-8 positions of the octanoyl moiety bound to the lipoyl domains of lipoate-dependent enzymes, thereby converting the octanoylated domains into lipoylated derivatives. The polypeptide is Lipoyl synthase (Shewanella sp. (strain MR-7)).